Reading from the N-terminus, the 435-residue chain is Eukaryotic peptide chain release factor subunit 1 (435 aa).

The protein belongs to the eukaryotic release factor 1 family. As to quaternary structure, heterodimer of two subunits, one of which binds GTP.

The protein resides in the cytoplasm. In terms of biological role, directs the termination of nascent peptide synthesis (translation) in response to the termination codons UAA, UAG and UGA. This chain is Eukaryotic peptide chain release factor subunit 1 (SU2), found in Podospora anserina (Pleurage anserina).